Reading from the N-terminus, the 119-residue chain is Host cell factor C1 regulator 1 (119 aa).

Positions 1-34 (MILQQPLERGPQGRAQRDPRAASGASGGLDAREP) are disordered. The interval 57-60 (DHPY) is interaction with HCFC1. A Nuclear export signal motif is present at residues 91–100 (IPEALRLLRL).

As to quaternary structure, interacts with HCFC1.

The protein resides in the cytoplasm. It is found in the nucleus. Functionally, regulates HCFC1 activity by modulating its subcellular localization. Overexpression of HCFC1R1 leads to accumulation of HCFC1 in the cytoplasm. HCFC1R1-mediated export may provide the pool of cytoplasmic HCFC1 required for import of virion-derived VP16 into the nucleus. The polypeptide is Host cell factor C1 regulator 1 (HCFC1R1) (Bos taurus (Bovine)).